Here is a 164-residue protein sequence, read N- to C-terminus: Telomerase-associated protein of 19 kDa (164 aa).

In terms of assembly, component of the telomerase holoenzyme complex, composed of the catalytic core (the catalytic subunit TERT, the telomerase RNA template component TER and TAP65/p65), which is associated with two heterotrimeric subcomplexes: (i) the replication protein A (RPA)-related subcomplex, composed of TEB1, RPA2/TEB2 and RPA3/TEB3 and (ii) the CST-like subcomplex, composed of TAP75/p75, TAP45/p45 and TAP19/p19. TEB1 and the CST-like subcomplex are tethered to the catalytic core by TAP50/p50.

The protein resides in the chromosome. The protein localises to the telomere. In terms of biological role, component of a CST-like subcomplex of the holoenzyme telomerase ribonucleoprotein complex, which stimulates telomerase complementary-strand synthesis. Telomerase is an essential ribonucleoprotein enzyme that copies new telomeric repeats onto chromosome ends by repetitively synthesizing the short telomere-repeat sequence 5'-TTGGGG-3' using an RNA template component TER. The CST-like subcomplex (also named 7-4-1) binds telomeric single-stranded DNA and coordinates telomere G-strand and C-strand synthesis. This is Telomerase-associated protein of 19 kDa from Tetrahymena thermophila (strain SB210).